We begin with the raw amino-acid sequence, 86 residues long: Chymotrypsin inhibitor (86 aa).

The signal sequence occupies residues 1–16 (MKTLCIFLVLVVAVAA). 4 cysteine pairs are disulfide-bonded: cysteine 26-cysteine 58, cysteine 38-cysteine 50, cysteine 42-cysteine 82, and cysteine 60-cysteine 76. One can recognise a TIL domain in the interval 26–82 (CPPNKEFGSYGDCPPSCLKNPPNFCTLKLNYGCKCKEGYVLTRYQDYESDCIKPEEC).

The protein belongs to the serine protease inhibitor-like (TIL domain-containing) family. As to expression, only expressed in fat body.

Its subcellular location is the secreted. Serine protease inhibitor that inhibits chymotrypsin (IC(50)=34.13 nM, Ki=49.85 nM), microbial serine proteases (subtilisin A (IC(50)=21.31 nM, Ki=20.51 nM) and proteinase K (IC(50)=52.56 nM, Ki=65.42 nM)), as well as human neutrophil elastase (IC(50)=11.54 nM, Ki=8.74 nM), and porcine pancreatic elastase (IC(50)=19.07 nM, Ki=11.32 nM). This is Chymotrypsin inhibitor from Araneus ventricosus (Orbweaver spider).